The sequence spans 314 residues: Ecto-ADP-ribosyltransferase 4 (314 aa).

The signal sequence occupies residues 1 to 46 (MGPLINRCKKILLPTTVPPATMRIWLLGGLLPFLLLLSGLQRPTEG). Cystine bridges form between Cys-69-Cys-280 and Cys-182-Cys-231. The region spanning 91–276 (KNYFRMWQKA…LQLRSTGNLS (186 aa)) is the TR mART core domain. N-linked (GlcNAc...) asparagine glycosylation occurs at Asn-114. Tyr-126 is a binding site for NAD(+). Asn-178 is a glycosylation site (N-linked (GlcNAc...) asparagine). Gln-206 lines the NAD(+) pocket. The N-linked (GlcNAc...) asparagine glycan is linked to Asn-222. Ser-240 is an NAD(+) binding site. 2 N-linked (GlcNAc...) asparagine glycosylation sites follow: Asn-257 and Asn-274. The GPI-anchor amidated alanine moiety is linked to residue Ala-285. Positions 286–314 (SSKKCIPDPIAIASLSFLTSVIIFSKSRV) are cleaved as a propeptide — removed in mature form.

This sequence belongs to the Arg-specific ADP-ribosyltransferase family. In terms of tissue distribution, expressed in spleen and T-cells.

It localises to the cell membrane. It catalyses the reaction L-arginyl-[protein] + NAD(+) = N(omega)-(ADP-D-ribosyl)-L-arginyl-[protein] + nicotinamide + H(+). This Homo sapiens (Human) protein is Ecto-ADP-ribosyltransferase 4 (ART4).